The chain runs to 571 residues: E3 ubiquitin-protein ligase RNF168 (571 aa).

Residues 16–55 form an RING-type zinc finger; sequence CGICMEILVEPVTLPCNHTLCKPCFQSTVEKASLCCPFCR. Residue Ser-70 is modified to Phosphoserine. The LR motif 1 motif lies at 110–128; it reads LSKPGELRREYEEEISKVA. Ser-134 carries the phosphoserine modification. The UMI motif signature appears at 143-151; that stretch reads EEYIQRLLA. 2 disordered regions span residues 151 to 174 and 191 to 292; these read AEEE…QLKS and EGSI…GADS. Residues 168–191 carry the MIU motif 1 motif; it reads MEEQLKSDEELARKLSIDINNFCE. Ser-197 is modified (phosphoserine). Residues 202–214 are compositionally biased toward basic and acidic residues; sequence RKSDPVTPKSEKK. Residue Lys-210 forms a Glycyl lysine isopeptide (Lys-Gly) (interchain with G-Cter in SUMO2) linkage. The segment covering 231 to 242 has biased composition (polar residues); the sequence is PKSQFGSASHSE. A compositionally biased stretch (basic and acidic residues) spans 243-263; the sequence is AVQEVRKDSVSKDIDSSDRKS. Thr-362 is modified (phosphothreonine). Disordered regions lie at residues 390-422 and 459-560; these read NQES…EETE and KEQM…ISQK. A phosphoserine mark is found at Ser-411, Ser-414, and Ser-415. The MIU motif 2 motif lies at 439–462; the sequence is RHKQEEQDRLLALQLQKEVDKEQM. Positions 466–477 match the LR motif 2 motif; it reads RQKGSPDEYHLR. Position 470 is a phosphoserine (Ser-470). The segment covering 508–519 has biased composition (basic and acidic residues); it reads PTPERGSRDKNR. 2 stretches are compositionally biased toward polar residues: residues 520-530 and 549-560; these read QVSLKMQLKQS and SAHSLQPSISQK. Residue Lys-528 forms a Glycyl lysine isopeptide (Lys-Gly) (interchain with G-Cter in SUMO2) linkage.

This sequence belongs to the RNF168 family. In terms of assembly, monomer. Interacts with UBE2N/UBC13. In terms of processing, sumoylated with SUMO1 by PIAS4 in response to double-strand breaks (DSBs). Post-translationally, ubiquitinated.

It is found in the nucleus. The enzyme catalyses S-ubiquitinyl-[E2 ubiquitin-conjugating enzyme]-L-cysteine + [acceptor protein]-L-lysine = [E2 ubiquitin-conjugating enzyme]-L-cysteine + N(6)-ubiquitinyl-[acceptor protein]-L-lysine.. It participates in protein modification; protein ubiquitination. E3 ubiquitin-protein ligase required for accumulation of repair proteins to sites of DNA damage. Acts with UBE2N/UBC13 to amplify the RNF8-dependent histone ubiquitination. Recruited to sites of DNA damage at double-strand breaks (DSBs) by binding to ubiquitinated histone H2A and H2AX and amplifies the RNF8-dependent H2A ubiquitination, promoting the formation of 'Lys-63'-linked ubiquitin conjugates. This leads to concentrate ubiquitinated histones H2A and H2AX at DNA lesions to the threshold required for recruitment of TP53BP1 and BRCA1. Also recruited at DNA interstrand cross-links (ICLs) sites and promotes accumulation of 'Lys-63'-linked ubiquitination of histones H2A and H2AX, leading to recruitment of FAAP20/C1orf86 and Fanconi anemia (FA) complex, followed by interstrand cross-link repair. H2A ubiquitination also mediates the ATM-dependent transcriptional silencing at regions flanking DSBs in cis, a mechanism to avoid collision between transcription and repair intermediates. Also involved in class switch recombination in immune system, via its role in regulation of DSBs repair. Following DNA damage, promotes the ubiquitination and degradation of JMJD2A/KDM4A in collaboration with RNF8, leading to unmask H4K20me2 mark and promote the recruitment of TP53BP1 at DNA damage sites. Not able to initiate 'Lys-63'-linked ubiquitination in vitro; possibly due to partial occlusion of the UBE2N/UBC13-binding region. Catalyzes monoubiquitination of 'Lys-13' and 'Lys-15' of nucleosomal histone H2A (H2AK13Ub and H2AK15Ub, respectively). The protein is E3 ubiquitin-protein ligase RNF168 of Homo sapiens (Human).